The sequence spans 872 residues: Bifunctional uridylyltransferase/uridylyl-removing enzyme (872 aa).

The segment at 1–332 is uridylyltransferase; that stretch reads MALPNKVKKL…PKHHQPIIQE (332 aa). The segment at 333-691 is uridylyl-removing; that stretch reads LDRNFERIGN…VSNKAMHGGT (359 aa). The HD domain maps to 450–572; sequence VDEHTHRLIN…VKTERQLDYL (123 aa). 2 ACT domains span residues 692–773 and 799–872; these read QVFV…FKKN and LIEI…AETE.

Belongs to the GlnD family. Mg(2+) is required as a cofactor.

The enzyme catalyses [protein-PII]-L-tyrosine + UTP = [protein-PII]-uridylyl-L-tyrosine + diphosphate. The catalysed reaction is [protein-PII]-uridylyl-L-tyrosine + H2O = [protein-PII]-L-tyrosine + UMP + H(+). Its activity is regulated as follows. Uridylyltransferase (UTase) activity is inhibited by glutamine, while glutamine activates uridylyl-removing (UR) activity. In terms of biological role, modifies, by uridylylation and deuridylylation, the PII regulatory proteins (GlnB and homologs), in response to the nitrogen status of the cell that GlnD senses through the glutamine level. Under low glutamine levels, catalyzes the conversion of the PII proteins and UTP to PII-UMP and PPi, while under higher glutamine levels, GlnD hydrolyzes PII-UMP to PII and UMP (deuridylylation). Thus, controls uridylylation state and activity of the PII proteins, and plays an important role in the regulation of nitrogen assimilation and metabolism. In Pseudoalteromonas translucida (strain TAC 125), this protein is Bifunctional uridylyltransferase/uridylyl-removing enzyme.